The sequence spans 436 residues: uncharacterized protein (436 aa).

The first 19 residues, 1–19, serve as a signal peptide directing secretion; that stretch reads MKKLLLASIIGLASTTSFA.

This is an uncharacterized protein from Rickettsia bellii (strain RML369-C).